The following is a 291-amino-acid chain: Transcription factor bHLH53 (291 aa).

In terms of domain architecture, bHLH spans P163–L212.

As to quaternary structure, homodimer. As to expression, expressed constitutively in roots, leaves, stems, and flowers.

The protein resides in the nucleus. The chain is Transcription factor bHLH53 (BHLH53) from Arabidopsis thaliana (Mouse-ear cress).